A 483-amino-acid polypeptide reads, in one-letter code: Glutamyl-tRNA(Gln) amidotransferase subunit A (483 aa).

Residues Lys-77 and Ser-152 each act as charge relay system in the active site. Catalysis depends on Ser-176, which acts as the Acyl-ester intermediate.

This sequence belongs to the amidase family. GatA subfamily. As to quaternary structure, heterotrimer of A, B and C subunits.

It carries out the reaction L-glutamyl-tRNA(Gln) + L-glutamine + ATP + H2O = L-glutaminyl-tRNA(Gln) + L-glutamate + ADP + phosphate + H(+). Its function is as follows. Allows the formation of correctly charged Gln-tRNA(Gln) through the transamidation of misacylated Glu-tRNA(Gln) in organisms which lack glutaminyl-tRNA synthetase. The reaction takes place in the presence of glutamine and ATP through an activated gamma-phospho-Glu-tRNA(Gln). The polypeptide is Glutamyl-tRNA(Gln) amidotransferase subunit A (Listeria monocytogenes serotype 4b (strain CLIP80459)).